The chain runs to 78 residues: Major outer membrane lipoprotein Lpp (78 aa).

An N-terminal signal peptide occupies residues 1-20 (MNRTKIVLGAVVLASTLLAG). Residue cysteine 21 is the site of N-palmitoyl cysteine attachment. The S-diacylglycerol cysteine moiety is linked to residue cysteine 21. 2 consecutive repeats follow at residues 24–34 (TAKVDQLTSDI) and 38–48 (NAKVDQLSNDV). Residues 27 to 75 (VDQLTSDIQTLNAKVDQLSNDVNAVHTDVQAAKDDAARANQRLDNQVRS) are a coiled coil. At lysine 78 the chain carries N6-murein peptidoglycan lysine.

The protein belongs to the Lpp family. As to quaternary structure, homotrimer.

Its subcellular location is the cell outer membrane. The protein resides in the secreted. It is found in the cell wall. Its function is as follows. A highly abundant outer membrane lipoprotein that controls the distance between the inner and outer membranes. The only protein known to be covalently linked to the peptidoglycan network (PGN). Also non-covalently binds the PGN. The link between the cell outer membrane and PGN contributes to maintenance of the structural and functional integrity of the cell envelope, and maintains the correct distance between the PGN and the outer membrane. This is Major outer membrane lipoprotein Lpp from Photorhabdus laumondii subsp. laumondii (strain DSM 15139 / CIP 105565 / TT01) (Photorhabdus luminescens subsp. laumondii).